A 396-amino-acid polypeptide reads, in one-letter code: MSQLKLNPYFGEYGGMYVPQILVPALKQLENAFVEAQADESFQAEFTDLLKNYAGRPTALTLTRNLSPNPMVKIYLKREDLLHGGAHKTNQVLGQALLAKRMGKKEIIAETGAGQHGVATALACALLGLKCKVYMGAKDVARQSPNVFRMRLMGAEVIPVTSGSATLKDACNEAMRDWSGSYEKAHYLLGTAAGPHPFPTIVREFQRMIGEETKKQMLEREGRLPDAVIACVGGGSNAIGMFADFIDETSVELIGVEPAGKGIDTHMHGAPLKHGKTGIFFGMKAPLMQDSEGQIEESYSISAGLDFPSVGPQHAHLNAIGRARYESATDDEALEAFQLLARSEGIIPALESAHALAYALRLARECTKETILVVNLSGRGDKDIFTVSDILNGKEE.

Lysine 88 carries the post-translational modification N6-(pyridoxal phosphate)lysine.

It belongs to the TrpB family. Tetramer of two alpha and two beta chains. Requires pyridoxal 5'-phosphate as cofactor.

The catalysed reaction is (1S,2R)-1-C-(indol-3-yl)glycerol 3-phosphate + L-serine = D-glyceraldehyde 3-phosphate + L-tryptophan + H2O. It participates in amino-acid biosynthesis; L-tryptophan biosynthesis; L-tryptophan from chorismate: step 5/5. The beta subunit is responsible for the synthesis of L-tryptophan from indole and L-serine. The chain is Tryptophan synthase beta chain from Shewanella sp. (strain MR-7).